The chain runs to 421 residues: Periplasmic [Fe] hydrogenase large subunit (421 aa).

4Fe-4S ferredoxin-type domains are found at residues histidine 26–proline 57 and serine 59–serine 86. [4Fe-4S] cluster is bound by residues cysteine 35, cysteine 38, cysteine 41, cysteine 45, cysteine 66, cysteine 69, cysteine 72, cysteine 76, cysteine 179, cysteine 234, cysteine 378, and cysteine 382. A Fe(2+)-binding site is contributed by cysteine 382.

As to quaternary structure, heterodimer of a large and a small subunit. The cofactor is [4Fe-4S] cluster. Fe(2+) serves as cofactor.

It is found in the periplasm. It catalyses the reaction H2 + 2 oxidized [2Fe-2S]-[ferredoxin] = 2 reduced [2Fe-2S]-[ferredoxin] + 2 H(+). Its function is as follows. May be involved in hydrogen uptake for the reduction of sulfate to hydrogen sulfide in an electron transport chain. Cytochrome c3 is likely to be the physiological electron carrier for the enzyme. This chain is Periplasmic [Fe] hydrogenase large subunit (hydA), found in Nitratidesulfovibrio vulgaris (strain ATCC 29579 / DSM 644 / CCUG 34227 / NCIMB 8303 / VKM B-1760 / Hildenborough) (Desulfovibrio vulgaris).